The primary structure comprises 456 residues: Bifunctional protein GlmU (456 aa).

Residues 1 to 229 (MLNVVILAAG…GWETLGVNSR (229 aa)) are pyrophosphorylase. Residues 7–10 (LAAG), lysine 21, glutamine 73, 78–79 (GT), 103–105 (YGD), glycine 139, glutamate 154, asparagine 169, and asparagine 227 contribute to the UDP-N-acetyl-alpha-D-glucosamine site. Aspartate 105 provides a ligand contact to Mg(2+). Asparagine 227 contributes to the Mg(2+) binding site. Positions 230-250 (VQQAELERRWQQEQARRQLEA) are linker. Residues 251 to 456 (GVTLADPARF…EGWQRPQKKS (206 aa)) are N-acetyltransferase. Positions 333 and 351 each coordinate UDP-N-acetyl-alpha-D-glucosamine. The active-site Proton acceptor is histidine 363. The UDP-N-acetyl-alpha-D-glucosamine site is built by tyrosine 366 and asparagine 377. Residues alanine 380, 386–387 (NY), serine 405, alanine 423, and arginine 440 contribute to the acetyl-CoA site.

In the N-terminal section; belongs to the N-acetylglucosamine-1-phosphate uridyltransferase family. The protein in the C-terminal section; belongs to the transferase hexapeptide repeat family. Homotrimer. The cofactor is Mg(2+).

Its subcellular location is the cytoplasm. It catalyses the reaction alpha-D-glucosamine 1-phosphate + acetyl-CoA = N-acetyl-alpha-D-glucosamine 1-phosphate + CoA + H(+). The enzyme catalyses N-acetyl-alpha-D-glucosamine 1-phosphate + UTP + H(+) = UDP-N-acetyl-alpha-D-glucosamine + diphosphate. It participates in nucleotide-sugar biosynthesis; UDP-N-acetyl-alpha-D-glucosamine biosynthesis; N-acetyl-alpha-D-glucosamine 1-phosphate from alpha-D-glucosamine 6-phosphate (route II): step 2/2. Its pathway is nucleotide-sugar biosynthesis; UDP-N-acetyl-alpha-D-glucosamine biosynthesis; UDP-N-acetyl-alpha-D-glucosamine from N-acetyl-alpha-D-glucosamine 1-phosphate: step 1/1. It functions in the pathway bacterial outer membrane biogenesis; LPS lipid A biosynthesis. Catalyzes the last two sequential reactions in the de novo biosynthetic pathway for UDP-N-acetylglucosamine (UDP-GlcNAc). The C-terminal domain catalyzes the transfer of acetyl group from acetyl coenzyme A to glucosamine-1-phosphate (GlcN-1-P) to produce N-acetylglucosamine-1-phosphate (GlcNAc-1-P), which is converted into UDP-GlcNAc by the transfer of uridine 5-monophosphate (from uridine 5-triphosphate), a reaction catalyzed by the N-terminal domain. The protein is Bifunctional protein GlmU of Bordetella petrii (strain ATCC BAA-461 / DSM 12804 / CCUG 43448).